A 477-amino-acid polypeptide reads, in one-letter code: Ribulose bisphosphate carboxylase large chain (477 aa).

A propeptide spanning residues 1–2 (MS) is cleaved from the precursor. An N-acetylproline modification is found at Pro3. Residue Lys14 is modified to N6,N6,N6-trimethyllysine. Positions 123 and 173 each coordinate substrate. The active-site Proton acceptor is the Lys175. Lys177 serves as a coordination point for substrate. Mg(2+) is bound by residues Lys201, Asp203, and Glu204. Residue Lys201 is modified to N6-carboxylysine. The active-site Proton acceptor is His294. Residues Arg295, His327, and Ser379 each contribute to the substrate site.

This sequence belongs to the RuBisCO large chain family. Type I subfamily. Heterohexadecamer of 8 large chains and 8 small chains; disulfide-linked. The disulfide link is formed within the large subunit homodimers. It depends on Mg(2+) as a cofactor. In terms of processing, the disulfide bond which can form in the large chain dimeric partners within the hexadecamer appears to be associated with oxidative stress and protein turnover.

It localises to the plastid. Its subcellular location is the chloroplast. The enzyme catalyses 2 (2R)-3-phosphoglycerate + 2 H(+) = D-ribulose 1,5-bisphosphate + CO2 + H2O. It carries out the reaction D-ribulose 1,5-bisphosphate + O2 = 2-phosphoglycolate + (2R)-3-phosphoglycerate + 2 H(+). RuBisCO catalyzes two reactions: the carboxylation of D-ribulose 1,5-bisphosphate, the primary event in carbon dioxide fixation, as well as the oxidative fragmentation of the pentose substrate in the photorespiration process. Both reactions occur simultaneously and in competition at the same active site. In Carthamus tinctorius (Safflower), this protein is Ribulose bisphosphate carboxylase large chain.